The primary structure comprises 51 residues: Sec-independent protein translocase protein TatA (51 aa).

Residues methionine 1–alanine 21 traverse the membrane as a helical segment.

This sequence belongs to the TatA/E family. In terms of assembly, the Tat system comprises two distinct complexes: a TatABC complex, containing multiple copies of TatA, TatB and TatC subunits, and a separate TatA complex, containing only TatA subunits. Substrates initially bind to the TatABC complex, which probably triggers association of the separate TatA complex to form the active translocon.

It is found in the cell inner membrane. Its function is as follows. Part of the twin-arginine translocation (Tat) system that transports large folded proteins containing a characteristic twin-arginine motif in their signal peptide across membranes. TatA could form the protein-conducting channel of the Tat system. In Rickettsia bellii (strain RML369-C), this protein is Sec-independent protein translocase protein TatA.